We begin with the raw amino-acid sequence, 136 residues long: Ig heavy chain V region BCL1 (136 aa).

Positions 1–19 are cleaved as a signal peptide; it reads MGWSCIIFFLVATATGVHS. The Ig-like domain occupies 20-135; that stretch reads QVQLQQSGPE…WGQGTTLTVS (116 aa).

The polypeptide is Ig heavy chain V region BCL1 (Mus musculus (Mouse)).